A 204-amino-acid chain; its full sequence is Peptide deformylase (204 aa).

Residues C131 and H174 each coordinate Fe cation. E175 is an active-site residue. Position 178 (H178) interacts with Fe cation.

It belongs to the polypeptide deformylase family. It depends on Fe(2+) as a cofactor.

The catalysed reaction is N-terminal N-formyl-L-methionyl-[peptide] + H2O = N-terminal L-methionyl-[peptide] + formate. In terms of biological role, removes the formyl group from the N-terminal Met of newly synthesized proteins. Requires at least a dipeptide for an efficient rate of reaction. N-terminal L-methionine is a prerequisite for activity but the enzyme has broad specificity at other positions. In Streptococcus gordonii (strain Challis / ATCC 35105 / BCRC 15272 / CH1 / DL1 / V288), this protein is Peptide deformylase.